The following is a 66-amino-acid chain: uncharacterized protein (66 aa).

This is an uncharacterized protein from Methanocaldococcus jannaschii (strain ATCC 43067 / DSM 2661 / JAL-1 / JCM 10045 / NBRC 100440) (Methanococcus jannaschii).